A 291-amino-acid polypeptide reads, in one-letter code: Ribosomal RNA small subunit methyltransferase H (291 aa).

S-adenosyl-L-methionine is bound by residues 31-33, D50, F77, D98, and Q105; that span reads GGH.

The protein belongs to the methyltransferase superfamily. RsmH family.

The protein resides in the cytoplasm. The enzyme catalyses cytidine(1402) in 16S rRNA + S-adenosyl-L-methionine = N(4)-methylcytidine(1402) in 16S rRNA + S-adenosyl-L-homocysteine + H(+). In terms of biological role, specifically methylates the N4 position of cytidine in position 1402 (C1402) of 16S rRNA. The sequence is that of Ribosomal RNA small subunit methyltransferase H from Endomicrobium trichonymphae.